Here is a 258-residue protein sequence, read N- to C-terminus: MQSPINSFKKALAEGRTQIGFWLALGDAYSAEVCAGAGFDWLLIDGEHAPQDLRSVLAQLQVIGAYRDCHAAVRVPSADTTVIKQYLDLGAQSLLVPMVDTADEAAAVVRACRYPPGGIRGVGGARASRWGRYPRYLHEADEQVCVVVQAETALALSNLEAIAEVDGIDGVFIGTADLAASLGFPGNPAHPEVQDAILDALQRVRAAGKAPGVLTPVEDLAQKYLAHGAVFVAVGIDTHLLAKQTSALAARFAQVAYS.

Catalysis depends on His-48, which acts as the Proton acceptor. A substrate-binding site is contributed by Gln-149. Glu-151 is a binding site for Mg(2+). Ala-176 and Asp-177 together coordinate substrate. Residue Asp-177 participates in Mg(2+) binding.

The protein belongs to the HpcH/HpaI aldolase family.

The enzyme catalyses (S)-4-hydroxy-2-oxopentanoate = acetaldehyde + pyruvate. Its pathway is xenobiotic degradation; biphenyl degradation. Its function is as follows. Catalyzes the reversible retro-aldol cleavage of 4-hydroxy-2-oxovalerate to pyruvate and acetaldehyde. This is 4-hydroxy-2-oxovalerate aldolase (bphF) from Rhodococcus jostii (strain RHA1).